An 870-amino-acid polypeptide reads, in one-letter code: Radial spoke head 10 homolog B (870 aa).

A compositionally biased stretch (basic and acidic residues) spans 1-16; the sequence is MVKEKKKADKKGEKSA. Residues 1-43 are disordered; that stretch reads MVKEKKKADKKGEKSARSPSSLSDNLDFSKQDGNTTRQEMSPA. Polar residues predominate over residues 17–39; that stretch reads RSPSSLSDNLDFSKQDGNTTRQE. MORN repeat units follow at residues 86–108, 109–131, 132–154, 155–177, 179–201, 204–226, 227–249, 251–273, 284–306, and 307–329; these read YEGE…GGCT, YRGM…DGLK, YEGD…DGSM, YEGE…TQPV, YIGH…QEGT, YEGD…SGNI, YEGQ…TTNE, YTGR…LKRI, YIGE…SGAM, and YDGE…NGRV. The segment at 674–704 is disordered; it reads NKSPSAVMSHESDAAHSDSARSSSSKLELSP. Basic and acidic residues predominate over residues 683–692; it reads HESDAAHSDS. Residues 693–703 show a composition bias toward low complexity; that stretch reads ARSSSSKLELS. The stretch at 784–811 forms a coiled coil; it reads KEKIRADRLRSTAQAQQRKMEDDELEAR. Residues 840–870 are disordered; that stretch reads VSSSHLILDPPKEDVTVSPSSKTITSKKKKK.

As to quaternary structure, interacts with RSPH6A. Does not appear to be part of the axonemal radial spoke complexes 1 or 2.

It is found in the cytoplasm. The protein resides in the cytoskeleton. Its subcellular location is the cilium axoneme. It localises to the cell projection. The protein localises to the cilium. It is found in the flagellum. In terms of biological role, may function as part of the axonemal radial spoke complex 3 (RS3). Radial spoke complexes are important for ciliary motility. The chain is Radial spoke head 10 homolog B (RSPH10B) from Homo sapiens (Human).